The chain runs to 211 residues: ATP phosphoribosyltransferase (211 aa).

The protein belongs to the ATP phosphoribosyltransferase family. Short subfamily. In terms of assembly, heteromultimer composed of HisG and HisZ subunits.

Its subcellular location is the cytoplasm. The enzyme catalyses 1-(5-phospho-beta-D-ribosyl)-ATP + diphosphate = 5-phospho-alpha-D-ribose 1-diphosphate + ATP. Its pathway is amino-acid biosynthesis; L-histidine biosynthesis; L-histidine from 5-phospho-alpha-D-ribose 1-diphosphate: step 1/9. Functionally, catalyzes the condensation of ATP and 5-phosphoribose 1-diphosphate to form N'-(5'-phosphoribosyl)-ATP (PR-ATP). Has a crucial role in the pathway because the rate of histidine biosynthesis seems to be controlled primarily by regulation of HisG enzymatic activity. This Pseudomonas savastanoi pv. phaseolicola (strain 1448A / Race 6) (Pseudomonas syringae pv. phaseolicola (strain 1448A / Race 6)) protein is ATP phosphoribosyltransferase.